The following is a 384-amino-acid chain: O-phospho-L-seryl-tRNA:Cys-tRNA synthase 1 (384 aa).

Pyridoxal 5'-phosphate contacts are provided by residues 88–89 (AR), Asn195, and 218–220 (SGH). Lys221 carries the post-translational modification N6-(pyridoxal phosphate)lysine.

The protein belongs to the SepCysS family. Homodimer. Interacts with SepRS. Pyridoxal 5'-phosphate is required as a cofactor.

The catalysed reaction is O-phospho-L-seryl-tRNA(Cys) + hydrogen sulfide + H(+) = L-cysteinyl-tRNA(Cys) + phosphate. Functionally, converts O-phospho-L-seryl-tRNA(Cys) (Sep-tRNA(Cys)) to L-cysteinyl-tRNA(Cys) (Cys-tRNA(Cys)). The protein is O-phospho-L-seryl-tRNA:Cys-tRNA synthase 1 of Methanocella arvoryzae (strain DSM 22066 / NBRC 105507 / MRE50).